Reading from the N-terminus, the 139-residue chain is ATP synthase epsilon chain (139 aa).

The protein belongs to the ATPase epsilon chain family. In terms of assembly, F-type ATPases have 2 components, CF(1) - the catalytic core - and CF(0) - the membrane proton channel. CF(1) has five subunits: alpha(3), beta(3), gamma(1), delta(1), epsilon(1). CF(0) has three main subunits: a, b and c.

The protein localises to the cell inner membrane. Functionally, produces ATP from ADP in the presence of a proton gradient across the membrane. This Acinetobacter baumannii (strain AB307-0294) protein is ATP synthase epsilon chain.